The sequence spans 373 residues: MEVMQVLHMNKGNGETSYAKNSTVQSKIISVGKPIIEEAVHEISCNNLLESMGIADLGCSSGPNTLSVISEIMDMVQTTSRRLGRPVPEFRVYLNDLYSNDFNYIFMSLPAFYHRLKEEKGIGCGSCYISGVAGSFYGRLFPSKSLHFVHSSSSLHWLSQVPPGLESKALAPLNKGKVYISKSSPQSVLNAYSLQFQNDFSMFIESRSQELVPGGRMVLSFMGRRSTDPTTEESCHHWELLAQAIMSLVREGLIEEAKVDSFNAPYYAPCAEEIKVEIQKVGSFVIDRLEGFEIDWDGGAVSDVQTAQGKLLIGQRVAKTIRAVVESMLESHFGIGQDIMDDLFSRYAEIVGNHLSKTRTKYINLVISLIKKG.

Tyrosine 18 lines the S-adenosyl-L-homocysteine pocket. Glutamine 25 serves as a coordination point for jasmonate. S-adenosyl-L-homocysteine contacts are provided by cysteine 59, asparagine 64, aspartate 96, leucine 97, serine 135, and phenylalanine 136. Jasmonate is bound by residues histidine 156 and tryptophan 157. The Mg(2+) site is built by asparagine 174, aspartate 260, phenylalanine 262, and asparagine 263.

This sequence belongs to the methyltransferase superfamily. Type-7 methyltransferase family. Requires Mg(2+) as cofactor.

It localises to the cytoplasm. Its subcellular location is the nucleus. It catalyses the reaction jasmonate + S-adenosyl-L-methionine = methyl (-)-jasmonate + S-adenosyl-L-homocysteine. It participates in lipid metabolism; oxylipin biosynthesis. Functionally, catalyzes the methylation of jasmonate into methyljasmonate, a plant volatile that acts as an important cellular regulator mediating diverse developmental processes and defense responses. This Theobroma cacao (Cacao) protein is Probable jasmonic acid carboxyl methyltransferase 2.